Reading from the N-terminus, the 523-residue chain is ATP synthase subunit alpha (523 aa).

173-180 (GDRQTGKT) provides a ligand contact to ATP.

It belongs to the ATPase alpha/beta chains family. In terms of assembly, F-type ATPases have 2 components, CF(1) - the catalytic core - and CF(0) - the membrane proton channel. CF(1) has five subunits: alpha(3), beta(3), gamma(1), delta(1), epsilon(1). CF(0) has three main subunits: a(1), b(2) and c(9-12). The alpha and beta chains form an alternating ring which encloses part of the gamma chain. CF(1) is attached to CF(0) by a central stalk formed by the gamma and epsilon chains, while a peripheral stalk is formed by the delta and b chains.

The protein localises to the cell membrane. The catalysed reaction is ATP + H2O + 4 H(+)(in) = ADP + phosphate + 5 H(+)(out). Produces ATP from ADP in the presence of a proton gradient across the membrane. The alpha chain is a regulatory subunit. The polypeptide is ATP synthase subunit alpha (Streptomyces griseus subsp. griseus (strain JCM 4626 / CBS 651.72 / NBRC 13350 / KCC S-0626 / ISP 5235)).